Reading from the N-terminus, the 77-residue chain is Secapin (77 aa).

Positions 1 to 32 are cleaved as a signal peptide; that stretch reads MKNYSKNATHLITVLLFSFVVILLIIPSKCEA. Positions 33-52 are excised as a propeptide; that stretch reads VSNDMQPLEARSADLIPEPR. Cysteine 61 and cysteine 72 are joined by a disulfide.

Belongs to the secapin family. As to expression, expressed by the venom gland.

Its subcellular location is the secreted. Nontoxic peptide. The polypeptide is Secapin (Vespa velutina nigrithorax (Hornet)).